The chain runs to 396 residues: MAAGMMKDLEAFRKAQRADGPATILAIGTATPPNAVDQSSYPDYYFKITNSEHMTELKEKFRRMCDKSAIKKRYMYLTEEILKENPKVCEYMAPSLDARQDMVVVEVPRLGKEAAAKAIKEWGQPKSKITHVIFCTTSGVDMPGADYQLTKLLGLRPSVKRVMMYQQGCFAGGTVLRVAKDLAENNRGARVLVVCSEITAVTFRGPSDTHLDSMVGQALFGDGAAALIVGADPVPEVEKPCFELMWTAQTILPDSDGAIDGHLREVGLTFHLLKDVPGLISKNIEKSLVEAFQQFGISDWNQLFWIAHPGGPAILDQVEAKLNLDPKKLSATRQVLSDYGNMSSACVHFILDEMRKSSKEKGCSTTGEGLDVGVLFGFGPGLTVETVVLKSVPLLD.

Cys169 is a catalytic residue.

This sequence belongs to the thiolase-like superfamily. Chalcone/stilbene synthases family.

It carries out the reaction (E)-4-coumaroyl-CoA + 3 malonyl-CoA + 3 H(+) = 2',4,4',6'-tetrahydroxychalcone + 3 CO2 + 4 CoA. It participates in secondary metabolite biosynthesis; flavonoid biosynthesis. Its function is as follows. The primary product of this enzyme is 4,2',4',6'-tetrahydroxychalcone (also termed naringenin-chalcone or chalcone) which can under specific conditions spontaneously isomerize into naringenin. The chain is Chalcone synthase (CHS) from Pinus sylvestris (Scotch pine).